The sequence spans 305 residues: GMP synthase [glutamine-hydrolyzing] subunit B (305 aa).

Residues 2–184 form the GMPS ATP-PPase domain; the sequence is VNTERFIQQA…LGLPREIQHR (183 aa). 29-35 is an ATP binding site; sequence SGGVDSS.

In terms of assembly, heterodimer composed of a glutamine amidotransferase subunit (A) and a GMP-binding subunit (B).

The enzyme catalyses XMP + L-glutamine + ATP + H2O = GMP + L-glutamate + AMP + diphosphate + 2 H(+). It participates in purine metabolism; GMP biosynthesis; GMP from XMP (L-Gln route): step 1/1. Its function is as follows. Catalyzes the synthesis of GMP from XMP. The sequence is that of GMP synthase [glutamine-hydrolyzing] subunit B from Methanosphaerula palustris (strain ATCC BAA-1556 / DSM 19958 / E1-9c).